We begin with the raw amino-acid sequence, 100 residues long: Small ribosomal subunit protein uS14c (100 aa).

Belongs to the universal ribosomal protein uS14 family. In terms of assembly, part of the 30S ribosomal subunit.

Its subcellular location is the plastid. The protein localises to the chloroplast. In terms of biological role, binds 16S rRNA, required for the assembly of 30S particles. This is Small ribosomal subunit protein uS14c from Vitis vinifera (Grape).